Consider the following 320-residue polypeptide: Lipoyl synthase (320 aa).

7 residues coordinate [4Fe-4S] cluster: cysteine 67, cysteine 72, cysteine 78, cysteine 93, cysteine 97, cysteine 100, and serine 307. The 218-residue stretch at 79–296 (FNHGTATFMI…RTKAEVMGFE (218 aa)) folds into the Radical SAM core domain.

This sequence belongs to the radical SAM superfamily. Lipoyl synthase family. [4Fe-4S] cluster serves as cofactor.

Its subcellular location is the cytoplasm. The catalysed reaction is [[Fe-S] cluster scaffold protein carrying a second [4Fe-4S](2+) cluster] + N(6)-octanoyl-L-lysyl-[protein] + 2 oxidized [2Fe-2S]-[ferredoxin] + 2 S-adenosyl-L-methionine + 4 H(+) = [[Fe-S] cluster scaffold protein] + N(6)-[(R)-dihydrolipoyl]-L-lysyl-[protein] + 4 Fe(3+) + 2 hydrogen sulfide + 2 5'-deoxyadenosine + 2 L-methionine + 2 reduced [2Fe-2S]-[ferredoxin]. Its pathway is protein modification; protein lipoylation via endogenous pathway; protein N(6)-(lipoyl)lysine from octanoyl-[acyl-carrier-protein]: step 2/2. In terms of biological role, catalyzes the radical-mediated insertion of two sulfur atoms into the C-6 and C-8 positions of the octanoyl moiety bound to the lipoyl domains of lipoate-dependent enzymes, thereby converting the octanoylated domains into lipoylated derivatives. The protein is Lipoyl synthase of Mannheimia succiniciproducens (strain KCTC 0769BP / MBEL55E).